We begin with the raw amino-acid sequence, 68 residues long: Antimicrobial peptide UyCT3 (68 aa).

The N-terminal stretch at 1–23 is a signal peptide; that stretch reads MKNQFVLLLLAIVFLQMIFQSDA. Phe36 is modified (phenylalanine amide). Residues 40-68 constitute a propeptide that is removed on maturation; it reads GLENMDKFDELFDGDLSEADLDFLKELMR.

Belongs to the non-disulfide-bridged peptide (NDBP) superfamily. Short antimicrobial peptide (group 4) family. Post-translationally, the non-amidated UyCT3 does not show antimicrobial activity. As to expression, expressed by the venom gland.

Its subcellular location is the secreted. It localises to the target cell membrane. Antimicrobial peptide that inhibits the growth of Gram-positive (S.aureus, MIC=10 uM) and Gram-negative bacteria (E.coli, MIC=15 uM and P.aeruginosa, MIC=6 uM). It also shows 35% of hemolysis when 15 uM are tested (95% at 50 uM). In Urodacus yaschenkoi (Inland robust scorpion), this protein is Antimicrobial peptide UyCT3.